Here is a 348-residue protein sequence, read N- to C-terminus: Aspartate carbamoyltransferase catalytic subunit (348 aa).

Positions 59 and 60 each coordinate carbamoyl phosphate. Lysine 87 is an L-aspartate binding site. Carbamoyl phosphate-binding residues include arginine 109, histidine 142, and glutamine 145. Arginine 182 and arginine 253 together coordinate L-aspartate. Glycine 294 and proline 295 together coordinate carbamoyl phosphate.

The protein belongs to the aspartate/ornithine carbamoyltransferase superfamily. ATCase family. As to quaternary structure, heterododecamer (2C3:3R2) of six catalytic PyrB chains organized as two trimers (C3), and six regulatory PyrI chains organized as three dimers (R2).

It catalyses the reaction carbamoyl phosphate + L-aspartate = N-carbamoyl-L-aspartate + phosphate + H(+). The protein operates within pyrimidine metabolism; UMP biosynthesis via de novo pathway; (S)-dihydroorotate from bicarbonate: step 2/3. Catalyzes the condensation of carbamoyl phosphate and aspartate to form carbamoyl aspartate and inorganic phosphate, the committed step in the de novo pyrimidine nucleotide biosynthesis pathway. This is Aspartate carbamoyltransferase catalytic subunit from Prochlorococcus marinus (strain MIT 9303).